The chain runs to 303 residues: Putative ring-cleaving dioxygenase MhqE (303 aa).

VOC domains lie at 5–129 (GLHH…IMED) and 150–266 (GMKG…IATD). The Fe cation site is built by His8, His215, and Glu262.

It belongs to the extradiol ring-cleavage dioxygenase family. Requires Fe(2+) as cofactor.

The protein resides in the cytoplasm. In terms of biological role, putative ring-cleavage dioxygenase that may contribute to the degradation of aromatic compounds. This Bacillus subtilis (strain 168) protein is Putative ring-cleaving dioxygenase MhqE (mhqE).